The sequence spans 325 residues: Biotin synthase (325 aa).

The region spanning 43 to 262 is the Radical SAM core domain; it reads CSVETAQLLS…VAVARLLMPR (220 aa). The [4Fe-4S] cluster site is built by cysteine 58, cysteine 62, and cysteine 65. Residues cysteine 102, cysteine 133, cysteine 193, and arginine 266 each contribute to the [2Fe-2S] cluster site.

Belongs to the radical SAM superfamily. Biotin synthase family. In terms of assembly, homodimer. [4Fe-4S] cluster serves as cofactor. It depends on [2Fe-2S] cluster as a cofactor.

The enzyme catalyses (4R,5S)-dethiobiotin + (sulfur carrier)-SH + 2 reduced [2Fe-2S]-[ferredoxin] + 2 S-adenosyl-L-methionine = (sulfur carrier)-H + biotin + 2 5'-deoxyadenosine + 2 L-methionine + 2 oxidized [2Fe-2S]-[ferredoxin]. It functions in the pathway cofactor biosynthesis; biotin biosynthesis; biotin from 7,8-diaminononanoate: step 2/2. Catalyzes the conversion of dethiobiotin (DTB) to biotin by the insertion of a sulfur atom into dethiobiotin via a radical-based mechanism. The sequence is that of Biotin synthase from Azorhizobium caulinodans (strain ATCC 43989 / DSM 5975 / JCM 20966 / LMG 6465 / NBRC 14845 / NCIMB 13405 / ORS 571).